Consider the following 620-residue polypeptide: Bicaudal D-related protein homolog (620 aa).

Residues 23–41 (NNNNNSIVGGSSSSSSGGN) show a composition bias toward low complexity. Residues 23 to 53 (NNNNNSIVGGSSSSSSGGNKSKRPRQFGQYS) form a disordered region. Coiled-coil stretches lie at residues 120–331 (AAEL…LSER) and 461–575 (VLEQ…LIDE). 2 stretches are compositionally biased toward basic and acidic residues: residues 493-503 (KEERDQARGDL) and 509-528 (RDEL…DRRT). Residues 493 to 528 (KEERDQARGDLEDNTDRDELLSKAQTERDAANDRRT) are disordered.

This sequence belongs to the BICDR family. May homodimerize but does not interact with BicD. May interact with eEF1gamma; The interaction is probably indirect.

In terms of biological role, functions redundantly with BicD. Involved in formation and/or development of mechanosensory organs during metamorphosis. During macrochaetae development, together with BicD, involved in Rab 6 and Spn-F stability and distribution and actin cytoskeleton organization. The polypeptide is Bicaudal D-related protein homolog (Drosophila melanogaster (Fruit fly)).